We begin with the raw amino-acid sequence, 909 residues long: UPF0182 protein Moth_1139 (909 aa).

7 consecutive transmembrane segments (helical) span residues 8–28 (FCLLIIIPGFLVAAYLGSHFL), 51–71 (VGIRLGTIAFFFLFFYLNLLF), 103–123 (LGILYLLLSLAGALIFSPLAA), 165–185 (LLITAVVGAVLVTGFFYFIFN), 201–221 (LVHFSTLVALLFLIQAWGFRL), 245–265 (LLPGYNILGWVAVACGLIIVL), and 277–297 (AGILSFMAAYFLLVIAVPLAV). Residues 843-862 (PAPAASPQPPSQAATGSPGN) are disordered.

It belongs to the UPF0182 family.

Its subcellular location is the cell membrane. This is UPF0182 protein Moth_1139 from Moorella thermoacetica (strain ATCC 39073 / JCM 9320).